The primary structure comprises 636 residues: 1-deoxy-D-xylulose-5-phosphate synthase (636 aa).

Residues H74 and 115 to 117 each bind thiamine diphosphate; that span reads GHA. A Mg(2+)-binding site is contributed by D146. Thiamine diphosphate-binding positions include 147-148, N175, Y285, and E368; that span reads GA. N175 contacts Mg(2+).

It belongs to the transketolase family. DXPS subfamily. As to quaternary structure, homodimer. Mg(2+) serves as cofactor. Requires thiamine diphosphate as cofactor.

It catalyses the reaction D-glyceraldehyde 3-phosphate + pyruvate + H(+) = 1-deoxy-D-xylulose 5-phosphate + CO2. Its pathway is metabolic intermediate biosynthesis; 1-deoxy-D-xylulose 5-phosphate biosynthesis; 1-deoxy-D-xylulose 5-phosphate from D-glyceraldehyde 3-phosphate and pyruvate: step 1/1. Its function is as follows. Catalyzes the acyloin condensation reaction between C atoms 2 and 3 of pyruvate and glyceraldehyde 3-phosphate to yield 1-deoxy-D-xylulose-5-phosphate (DXP). The protein is 1-deoxy-D-xylulose-5-phosphate synthase of Anaeromyxobacter dehalogenans (strain 2CP-1 / ATCC BAA-258).